Here is a 185-residue protein sequence, read N- to C-terminus: Histone H1-delta (185 aa).

Disordered regions lie at residues 1 to 37 and 90 to 185; these read MADTDAAPAAPAPSTPKKAAKKKASKPKTPASHPKYS and RHVK…GKKK. The region spanning 32–105 is the H15 domain; sequence SHPKYSDMIA…GASGSFLLAE (74 aa). Basic residues predominate over residues 109 to 185; sequence TPKKAAAKKA…KAAKGKGKKK (77 aa).

It belongs to the histone H1/H5 family.

The protein resides in the nucleus. It localises to the chromosome. In terms of biological role, histones H1 are necessary for the condensation of nucleosome chains into higher-order structures. The chain is Histone H1-delta from Strongylocentrotus purpuratus (Purple sea urchin).